We begin with the raw amino-acid sequence, 361 residues long: Peptide chain release factor 1 (361 aa).

An N5-methylglutamine modification is found at Gln-236. The span at 285-309 (TAKDSARAADRKAQVGSGDRSERIR) shows a compositional bias: basic and acidic residues. Residues 285–311 (TAKDSARAADRKAQVGSGDRSERIRTY) are disordered.

The protein belongs to the prokaryotic/mitochondrial release factor family. Post-translationally, methylated by PrmC. Methylation increases the termination efficiency of RF1.

It is found in the cytoplasm. Its function is as follows. Peptide chain release factor 1 directs the termination of translation in response to the peptide chain termination codons UAG and UAA. In Methylorubrum extorquens (strain CM4 / NCIMB 13688) (Methylobacterium extorquens), this protein is Peptide chain release factor 1.